The following is a 700-amino-acid chain: Acetyl-coenzyme A carboxylase carboxyl transferase subunit beta, chloroplastic (700 aa).

Zn(2+) is bound by residues Cys34, Cys37, Cys53, and Cys56. The C4-type zinc finger occupies 34–56; sequence CENCETLIYKKSLLEQKGVCAEC. A CoA carboxyltransferase N-terminal domain is found at 445 to 700; that stretch reads KKGRDTKDTE…ETIEIYMYGD (256 aa).

Belongs to the AccD/PCCB family. In terms of assembly, acetyl-CoA carboxylase is a heterohexamer composed of biotin carboxyl carrier protein, biotin carboxylase and 2 subunits each of ACCase subunit alpha and ACCase plastid-coded subunit beta (accD). Zn(2+) is required as a cofactor.

The protein resides in the plastid. Its subcellular location is the chloroplast stroma. The catalysed reaction is N(6)-carboxybiotinyl-L-lysyl-[protein] + acetyl-CoA = N(6)-biotinyl-L-lysyl-[protein] + malonyl-CoA. It participates in lipid metabolism; malonyl-CoA biosynthesis; malonyl-CoA from acetyl-CoA: step 1/1. In terms of biological role, component of the acetyl coenzyme A carboxylase (ACC) complex. Biotin carboxylase (BC) catalyzes the carboxylation of biotin on its carrier protein (BCCP) and then the CO(2) group is transferred by the transcarboxylase to acetyl-CoA to form malonyl-CoA. The chain is Acetyl-coenzyme A carboxylase carboxyl transferase subunit beta, chloroplastic from Cryptomeria japonica (Japanese cedar).